A 322-amino-acid chain; its full sequence is Ferrochelatase (322 aa).

2 residues coordinate Fe cation: histidine 193 and glutamate 274.

Belongs to the ferrochelatase family.

Its subcellular location is the cytoplasm. The catalysed reaction is heme b + 2 H(+) = protoporphyrin IX + Fe(2+). Its pathway is porphyrin-containing compound metabolism; protoheme biosynthesis; protoheme from protoporphyrin-IX: step 1/1. In terms of biological role, catalyzes the ferrous insertion into protoporphyrin IX. The protein is Ferrochelatase of Aliivibrio fischeri (strain MJ11) (Vibrio fischeri).